Consider the following 705-residue polypeptide: SPbeta prophage-derived sublancin-168-processing and transport ATP-binding protein SunT (705 aa).

The 127-residue stretch at 12–138 (QFNSHDCGLA…SKFTNFILEI (127 aa)) folds into the Peptidase C39 domain. The active site involves C18. The next 6 helical transmembrane spans lie at 167 to 187 (IVFV…AGSF), 205 to 225 (LITI…FDFV), 281 to 301 (ANFV…VILY), 306 to 326 (ILFL…ILFF), 388 to 408 (VISN…IILW), and 418 to 438 (SMSL…LSSL). The 283-residue stretch at 168–450 (VFVILLTSLF…ILSMQSDLQQ (283 aa)) folds into the ABC transmembrane type-1 domain. One can recognise an ABC transporter domain in the interval 483 to 705 (IKTVNLNIGA…SYSENKEYSI (223 aa)). Residue 516-523 (GESGTGKS) coordinates ATP.

The protein belongs to the ABC transporter superfamily. SunT family. As to quaternary structure, homodimer.

It is found in the cell membrane. Functionally, sunT (TC 3.A.1.112.4) is required for production of the lantibiotic sublancin-168, probably by both processing the signal peptide and exporting the resulting mature lantibiotic. This is SPbeta prophage-derived sublancin-168-processing and transport ATP-binding protein SunT (sunT) from Bacillus subtilis (strain 168).